Consider the following 550-residue polypeptide: Membrane protein insertase YidC (550 aa).

A helical transmembrane segment spans residues 6-26 (NLLVIALLFVSFMIWQTWEQD). Disordered regions lie at residues 28 to 54 (APKPQVQQTTQTTTTAAGSAASQGVPA) and 111 to 132 (QSGLTGRNGPDNPNNNKGRPLY). Residues 30 to 52 (KPQVQQTTQTTTTAAGSAASQGV) are compositionally biased toward low complexity. The span at 111–127 (QSGLTGRNGPDNPNNNK) shows a compositional bias: polar residues. 4 helical membrane-spanning segments follow: residues 346–366 (KWIHSFLGNWGFSIIAITFIV), 421–441 (LGGCFPLLIQMPIFLALYYML), 459–479 (LSAQDPYYILPILMGATMFFI), and 500–520 (PVIFTVFFLWFPSGLVLYYIV).

It belongs to the OXA1/ALB3/YidC family. Type 1 subfamily. In terms of assembly, interacts with the Sec translocase complex via SecD. Specifically interacts with transmembrane segments of nascent integral membrane proteins during membrane integration.

Its subcellular location is the cell inner membrane. Its function is as follows. Required for the insertion and/or proper folding and/or complex formation of integral membrane proteins into the membrane. Involved in integration of membrane proteins that insert both dependently and independently of the Sec translocase complex, as well as at least some lipoproteins. Aids folding of multispanning membrane proteins. This Cronobacter sakazakii (strain ATCC BAA-894) (Enterobacter sakazakii) protein is Membrane protein insertase YidC.